The chain runs to 470 residues: 3-isopropylmalate dehydratase large subunit (470 aa).

Residues cysteine 348, cysteine 409, and cysteine 412 each contribute to the [4Fe-4S] cluster site.

Belongs to the aconitase/IPM isomerase family. LeuC type 1 subfamily. As to quaternary structure, heterodimer of LeuC and LeuD. [4Fe-4S] cluster is required as a cofactor.

The catalysed reaction is (2R,3S)-3-isopropylmalate = (2S)-2-isopropylmalate. It functions in the pathway amino-acid biosynthesis; L-leucine biosynthesis; L-leucine from 3-methyl-2-oxobutanoate: step 2/4. Its function is as follows. Catalyzes the isomerization between 2-isopropylmalate and 3-isopropylmalate, via the formation of 2-isopropylmaleate. The polypeptide is 3-isopropylmalate dehydratase large subunit (Acidithiobacillus ferrooxidans (strain ATCC 23270 / DSM 14882 / CIP 104768 / NCIMB 8455) (Ferrobacillus ferrooxidans (strain ATCC 23270))).